Here is a 1346-residue protein sequence, read N- to C-terminus: DNA-directed RNA polymerase subunit beta (1346 aa).

This sequence belongs to the RNA polymerase beta chain family. The RNAP catalytic core consists of 2 alpha, 1 beta, 1 beta' and 1 omega subunit. When a sigma factor is associated with the core the holoenzyme is formed, which can initiate transcription.

It catalyses the reaction RNA(n) + a ribonucleoside 5'-triphosphate = RNA(n+1) + diphosphate. DNA-dependent RNA polymerase catalyzes the transcription of DNA into RNA using the four ribonucleoside triphosphates as substrates. This Psychromonas ingrahamii (strain DSM 17664 / CCUG 51855 / 37) protein is DNA-directed RNA polymerase subunit beta.